Here is a 351-residue protein sequence, read N- to C-terminus: Phospho-N-acetylmuramoyl-pentapeptide-transferase (351 aa).

Transmembrane regions (helical) follow at residues 17–37 (TAYATIFAFLLALIFGPFIIS), 61–83 (MGIPTMGGVLIFFCVLVSLFFWI), 88–105 (IYFLIVLFVMVSFACLGF), 130–150 (ILFSFISVVMLYYFGGEHVSI), 158–178 (SLKLDLGILYIPFGMFVLISA), 190–210 (GLAIGLSIVVIGALIIIAYLT), 230–250 (LVIFLGALLGGSFGFLWFNAY), 254–274 (IMMGDTGSLSIGAVLGMVALI), 279–299 (ILFAILAGVFVVETLSVIIQV), and 328–348 (QVVIRFWIIGLIFAILALSTI).

Belongs to the glycosyltransferase 4 family. MraY subfamily. The cofactor is Mg(2+).

The protein resides in the cell inner membrane. The enzyme catalyses UDP-N-acetyl-alpha-D-muramoyl-L-alanyl-gamma-D-glutamyl-meso-2,6-diaminopimeloyl-D-alanyl-D-alanine + di-trans,octa-cis-undecaprenyl phosphate = di-trans,octa-cis-undecaprenyl diphospho-N-acetyl-alpha-D-muramoyl-L-alanyl-D-glutamyl-meso-2,6-diaminopimeloyl-D-alanyl-D-alanine + UMP. It functions in the pathway cell wall biogenesis; peptidoglycan biosynthesis. In terms of biological role, catalyzes the initial step of the lipid cycle reactions in the biosynthesis of the cell wall peptidoglycan: transfers peptidoglycan precursor phospho-MurNAc-pentapeptide from UDP-MurNAc-pentapeptide onto the lipid carrier undecaprenyl phosphate, yielding undecaprenyl-pyrophosphoryl-MurNAc-pentapeptide, known as lipid I. In Borrelia duttonii (strain Ly), this protein is Phospho-N-acetylmuramoyl-pentapeptide-transferase.